The following is a 606-amino-acid chain: Probable potassium transport system protein Kup 2 (606 aa).

12 helical membrane-spanning segments follow: residues 18 to 38, 46 to 66, 97 to 117, 140 to 160, 169 to 189, 204 to 224, 247 to 267, 286 to 306, 339 to 359, 368 to 388, 395 to 415, and 418 to 438; these read GLVFGDIGTSPIYTLTVIMTL, VLGILSLIVWTLIILVSVEYA, VAFVGFLAFMGVSLLLGDGII, AQGVLIFIAAVIALILFIFQF, AFGPIMVIWFGALTLSGIVSI, AVTFLMHNGLAGFFILSEVIL, AWYFVFSALVINYLGQGAFIL, ILYIPFLCLTIMATIIASQAL, IYIGSVNWSLLVAVIFIMLIF, AYGLAVTGTMFITGIMMTMIF, WKVPIALAVTLIDLVYLTANF, and LPHGGYWSLILASIPLAIMII.

This sequence belongs to the HAK/KUP transporter (TC 2.A.72) family.

It localises to the cell inner membrane. It catalyses the reaction K(+)(in) + H(+)(in) = K(+)(out) + H(+)(out). Transport of potassium into the cell. Likely operates as a K(+):H(+) symporter. The protein is Probable potassium transport system protein Kup 2 of Geobacter metallireducens (strain ATCC 53774 / DSM 7210 / GS-15).